The sequence spans 155 residues: Small ribosomal subunit protein uS7 (155 aa).

It belongs to the universal ribosomal protein uS7 family. Part of the 30S ribosomal subunit. Contacts proteins S9 and S11.

Its function is as follows. One of the primary rRNA binding proteins, it binds directly to 16S rRNA where it nucleates assembly of the head domain of the 30S subunit. Is located at the subunit interface close to the decoding center, probably blocks exit of the E-site tRNA. The chain is Small ribosomal subunit protein uS7 from Corynebacterium aurimucosum (strain ATCC 700975 / DSM 44827 / CIP 107346 / CN-1) (Corynebacterium nigricans).